The sequence spans 105 residues: Small ribosomal subunit protein uS10 (105 aa).

It belongs to the universal ribosomal protein uS10 family. Part of the 30S ribosomal subunit.

Involved in the binding of tRNA to the ribosomes. The chain is Small ribosomal subunit protein uS10 from Rickettsia rickettsii (strain Iowa).